Reading from the N-terminus, the 345-residue chain is tRNA dimethylallyltransferase (345 aa).

9-16 lines the ATP pocket; the sequence is GPTASGKS. 11 to 16 serves as a coordination point for substrate; that stretch reads TASGKS. Interaction with substrate tRNA regions lie at residues 34-37 and 195-199; these read DSMQ and QRMIR.

It belongs to the IPP transferase family. In terms of assembly, monomer. Mg(2+) is required as a cofactor.

It catalyses the reaction adenosine(37) in tRNA + dimethylallyl diphosphate = N(6)-dimethylallyladenosine(37) in tRNA + diphosphate. In terms of biological role, catalyzes the transfer of a dimethylallyl group onto the adenine at position 37 in tRNAs that read codons beginning with uridine, leading to the formation of N6-(dimethylallyl)adenosine (i(6)A). This is tRNA dimethylallyltransferase from Orientia tsutsugamushi (strain Ikeda) (Rickettsia tsutsugamushi).